Consider the following 82-residue polypeptide: ATP synthase subunit c (82 aa).

2 helical membrane passes run 5–25 (MSLV…FGAI) and 55–75 (FLII…VIAF).

This sequence belongs to the ATPase C chain family. In terms of assembly, F-type ATPases have 2 components, F(1) - the catalytic core - and F(0) - the membrane proton channel. F(1) has five subunits: alpha(3), beta(3), gamma(1), delta(1), epsilon(1). F(0) has three main subunits: a(1), b(2) and c(10-14). The alpha and beta chains form an alternating ring which encloses part of the gamma chain. F(1) is attached to F(0) by a central stalk formed by the gamma and epsilon chains, while a peripheral stalk is formed by the delta and b chains.

Its subcellular location is the cell membrane. Its function is as follows. F(1)F(0) ATP synthase produces ATP from ADP in the presence of a proton or sodium gradient. F-type ATPases consist of two structural domains, F(1) containing the extramembraneous catalytic core and F(0) containing the membrane proton channel, linked together by a central stalk and a peripheral stalk. During catalysis, ATP synthesis in the catalytic domain of F(1) is coupled via a rotary mechanism of the central stalk subunits to proton translocation. In terms of biological role, key component of the F(0) channel; it plays a direct role in translocation across the membrane. A homomeric c-ring of between 10-14 subunits forms the central stalk rotor element with the F(1) delta and epsilon subunits. This is ATP synthase subunit c from Carboxydothermus hydrogenoformans (strain ATCC BAA-161 / DSM 6008 / Z-2901).